A 125-amino-acid chain; its full sequence is MSNLLKEFNEQQMKLLSNKEIPKFSAGDTLRVSMKIFDGVSERIQVFEGVCIKRRNNGLHSSFTLRKISYNESIQLQVFLYSPTVESIEVVKFGKVRRAKLYYMLSLFGKSARIKERSNVARHAS.

Belongs to the bacterial ribosomal protein bL19 family.

Its function is as follows. This protein is located at the 30S-50S ribosomal subunit interface and may play a role in the structure and function of the aminoacyl-tRNA binding site. This chain is Large ribosomal subunit protein bL19, found in Ehrlichia canis (strain Jake).